We begin with the raw amino-acid sequence, 244 residues long: UPF0246 protein SGO_1307 (244 aa).

Belongs to the UPF0246 family.

The protein is UPF0246 protein SGO_1307 of Streptococcus gordonii (strain Challis / ATCC 35105 / BCRC 15272 / CH1 / DL1 / V288).